The primary structure comprises 99 residues: Large ribosomal subunit protein bL21 (99 aa).

Belongs to the bacterial ribosomal protein bL21 family. In terms of assembly, part of the 50S ribosomal subunit. Contacts protein L20.

In terms of biological role, this protein binds to 23S rRNA in the presence of protein L20. The sequence is that of Large ribosomal subunit protein bL21 from Anaplasma phagocytophilum (strain HZ).